The primary structure comprises 660 residues: ATP-dependent RNA helicase DDX18 (660 aa).

Positions 16–153 (RNAKLRQRNL…DVKKADDSEV (138 aa)) are disordered. The span at 25–40 (LKLQETSDTSLSQPQN) shows a compositional bias: polar residues. Positions 124-133 (PDTKKAKTEE) are enriched in basic and acidic residues. Positions 134–143 (SAEACEEPED) are enriched in acidic residues. The Q motif motif lies at 169–197 (FASLSNLVNENTLKAIEEMGFKRMTEIQH). The 176-residue stretch at 200–375 (IRPLLEGRDL…RISLKKEPLY (176 aa)) folds into the Helicase ATP-binding domain. ATP is bound at residue 213-220 (AKTGSGKT). The DEAD box motif lies at 323 to 326 (DEAD). Positions 389–559 (GLEQGYVVCP…DIQSQLEKLI (171 aa)) constitute a Helicase C-terminal domain.

It belongs to the DEAD box helicase family. DDX18/HAS1 subfamily. As to quaternary structure, interacts with NOL8; the interaction is RNA-dependent. Interacts with PRC2 complex components EZH2, SUZ2 and JARID2; these interactions prevent deposition of the repressive H3K27me3 mark onto rDNA in pluripotent cells.

The protein resides in the nucleus. Its subcellular location is the nucleolus. The protein localises to the chromosome. The enzyme catalyses ATP + H2O = ADP + phosphate + H(+). In terms of biological role, ATP-dependent RNA helicase that plays a role in the regulation of R-loop homeostasis in both endogenous R-loop-prone regions and at sites of DNA damage. At endogenous loci such as actively transcribed genes, may act as a helicase to resolve the formation of R-loop during transcription and prevent the interference of R-loop with DNA-replication machinery. Also participates in the removal of DNA-lesion-associated R-loop. Plays an essential role for establishing pluripotency during embryogenesis and for pluripotency maintenance in embryonic stem cells. Mechanistically, prevents the polycomb repressive complex 2 (PRC2) from accessing rDNA loci and protects the active chromatin status in nucleolus. The chain is ATP-dependent RNA helicase DDX18 (Ddx18) from Mus musculus (Mouse).